The chain runs to 223 residues: Uracil-DNA glycosylase (223 aa).

Asp-61 acts as the Proton acceptor in catalysis.

Belongs to the uracil-DNA glycosylase (UDG) superfamily. UNG family.

Its subcellular location is the cytoplasm. It carries out the reaction Hydrolyzes single-stranded DNA or mismatched double-stranded DNA and polynucleotides, releasing free uracil.. Its function is as follows. Excises uracil residues from the DNA which can arise as a result of misincorporation of dUMP residues by DNA polymerase or due to deamination of cytosine. The polypeptide is Uracil-DNA glycosylase (Tolumonas auensis (strain DSM 9187 / NBRC 110442 / TA 4)).